Consider the following 402-residue polypeptide: Type II NADH:quinone oxidoreductase (402 aa).

Residues 12-16, 39-40, and valine 83 each bind FAD; these read GAGYA and NK. Glutamate 172 is a catalytic residue. Residues aspartate 302, 319-320, and lysine 379 each bind FAD; that span reads AQ.

This sequence belongs to the NADH dehydrogenase family. Requires FAD as cofactor.

Its subcellular location is the cell membrane. It catalyses the reaction a quinone + NADH + H(+) = a quinol + NAD(+). In terms of biological role, alternative, nonproton pumping NADH:quinone oxidoreductase that delivers electrons to the respiratory chain by oxidation of NADH and reduction of quinones, and contributes to the regeneration of NAD(+). In Staphylococcus aureus (strain MSSA476), this protein is Type II NADH:quinone oxidoreductase.